The following is a 556-amino-acid chain: Urocanate hydratase (556 aa).

NAD(+) is bound by residues 52-53 (GG), Q130, 176-178 (GMG), E196, R201, 243-244 (NA), 264-268 (QTSAH), 274-275 (YL), and Y323. The active site involves C411. An NAD(+)-binding site is contributed by G493.

Belongs to the urocanase family. Requires NAD(+) as cofactor.

The protein resides in the cytoplasm. It carries out the reaction 4-imidazolone-5-propanoate = trans-urocanate + H2O. Its pathway is amino-acid degradation; L-histidine degradation into L-glutamate; N-formimidoyl-L-glutamate from L-histidine: step 2/3. Its function is as follows. Catalyzes the conversion of urocanate to 4-imidazolone-5-propionate. In Rhodospirillum rubrum (strain ATCC 11170 / ATH 1.1.1 / DSM 467 / LMG 4362 / NCIMB 8255 / S1), this protein is Urocanate hydratase.